A 431-amino-acid polypeptide reads, in one-letter code: Translation initiation factor 2 subunit gamma (431 aa).

A tr-type G domain is found at 26–223 (QPCVNIGMVG…ALETQIPTPS (198 aa)). Positions 35-42 (GHVDHGKT) are G1. Positions 38, 42, 63, and 65 each coordinate Mg(2+). 38 to 43 (DHGKTT) provides a ligand contact to GTP. Positions 63-67 (GISIR) are G2. 4 residues coordinate Zn(2+): Cys78, Cys81, Cys93, and Cys96. The interval 110 to 113 (DAPG) is G3. Residues 166 to 169 (NKID) and 201 to 203 (SAQ) each bind GTP. A G4 region spans residues 166–169 (NKID). Residues 201-203 (SAQ) form a G5 region.

This sequence belongs to the TRAFAC class translation factor GTPase superfamily. Classic translation factor GTPase family. EIF2G subfamily. In terms of assembly, heterotrimer composed of an alpha, a beta and a gamma chain. Mg(2+) is required as a cofactor.

It carries out the reaction GTP + H2O = GDP + phosphate + H(+). EIF-2 functions in the early steps of protein synthesis by forming a ternary complex with GTP and initiator tRNA. The polypeptide is Translation initiation factor 2 subunit gamma (Methanosarcina mazei (strain ATCC BAA-159 / DSM 3647 / Goe1 / Go1 / JCM 11833 / OCM 88) (Methanosarcina frisia)).